A 642-amino-acid chain; its full sequence is Threonine--tRNA ligase (642 aa).

The interval 239–530 is catalytic; sequence DHRKLGKELN…LTEHYAGAFP (292 aa). Cysteine 331, histidine 382, and histidine 507 together coordinate Zn(2+).

Belongs to the class-II aminoacyl-tRNA synthetase family. In terms of assembly, homodimer. Zn(2+) is required as a cofactor.

Its subcellular location is the cytoplasm. It catalyses the reaction tRNA(Thr) + L-threonine + ATP = L-threonyl-tRNA(Thr) + AMP + diphosphate + H(+). In terms of biological role, catalyzes the attachment of threonine to tRNA(Thr) in a two-step reaction: L-threonine is first activated by ATP to form Thr-AMP and then transferred to the acceptor end of tRNA(Thr). Also edits incorrectly charged L-seryl-tRNA(Thr). This is Threonine--tRNA ligase from Lawsonia intracellularis (strain PHE/MN1-00).